A 370-amino-acid chain; its full sequence is 3-dehydroquinate synthase (370 aa).

NAD(+) is bound by residues 108-112 (GVIGD), 132-133 (TT), Lys145, and Lys154. Zn(2+) contacts are provided by Glu187, His249, and His267.

The protein belongs to the sugar phosphate cyclases superfamily. Dehydroquinate synthase family. Co(2+) serves as cofactor. Zn(2+) is required as a cofactor. The cofactor is NAD(+).

The protein resides in the cytoplasm. It carries out the reaction 7-phospho-2-dehydro-3-deoxy-D-arabino-heptonate = 3-dehydroquinate + phosphate. The protein operates within metabolic intermediate biosynthesis; chorismate biosynthesis; chorismate from D-erythrose 4-phosphate and phosphoenolpyruvate: step 2/7. Its function is as follows. Catalyzes the conversion of 3-deoxy-D-arabino-heptulosonate 7-phosphate (DAHP) to dehydroquinate (DHQ). The polypeptide is 3-dehydroquinate synthase (Cereibacter sphaeroides (strain ATCC 17023 / DSM 158 / JCM 6121 / CCUG 31486 / LMG 2827 / NBRC 12203 / NCIMB 8253 / ATH 2.4.1.) (Rhodobacter sphaeroides)).